We begin with the raw amino-acid sequence, 209 residues long: ATP-dependent Clp protease proteolytic subunit (209 aa).

The active-site Nucleophile is serine 106. Histidine 131 is a catalytic residue.

Belongs to the peptidase S14 family. In terms of assembly, fourteen ClpP subunits assemble into 2 heptameric rings which stack back to back to give a disk-like structure with a central cavity, resembling the structure of eukaryotic proteasomes.

Its subcellular location is the cytoplasm. It catalyses the reaction Hydrolysis of proteins to small peptides in the presence of ATP and magnesium. alpha-casein is the usual test substrate. In the absence of ATP, only oligopeptides shorter than five residues are hydrolyzed (such as succinyl-Leu-Tyr-|-NHMec, and Leu-Tyr-Leu-|-Tyr-Trp, in which cleavage of the -Tyr-|-Leu- and -Tyr-|-Trp bonds also occurs).. Functionally, cleaves peptides in various proteins in a process that requires ATP hydrolysis. Has a chymotrypsin-like activity. Plays a major role in the degradation of misfolded proteins. The chain is ATP-dependent Clp protease proteolytic subunit from Caulobacter vibrioides (strain ATCC 19089 / CIP 103742 / CB 15) (Caulobacter crescentus).